The chain runs to 361 residues: MLRQGIAAQKKSFATLAAEQLLPKKYGGRYTVTLIPGDGVGKEVTDSVVKIFENENIPIDWETIDISGLENTENVQRAVESLKRNKVGLKGIWHTPADQTGHGSLNVALRKQLDIFANVALFKSIPGVKTRLNNIDMVIIRENTEGEYSGLEHESVPGVVESLKIMTRAKSERIARFAFDFALKNNRKSVCAVHKANIMKLGDGLFRNTVNEIGANEYPELDVKNIIVDNASMQAVAKPHQFDVLVTPNLYGSILGNIGSALIGGPGLVPGANFGREYAVFEPGSRHVGLDIKGQNVANPTAMILSSTLMLRHLGLNAYADRISKATYDVISEGKSTTRDIGGSASTSEFTNAVIEKLAKL.

A mitochondrion-targeting transit peptide spans 1-12 (MLRQGIAAQKKS). 3 residues coordinate substrate: R110, R141, and D229. D229 contacts Mg(2+).

This sequence belongs to the isocitrate and isopropylmalate dehydrogenases family. In terms of assembly, octamer of two non-identical subunits IDH1 and IDH2. Requires Mg(2+) as cofactor. It depends on Mn(2+) as a cofactor.

It is found in the mitochondrion. The catalysed reaction is D-threo-isocitrate + NAD(+) = 2-oxoglutarate + CO2 + NADH. Its function is as follows. Performs an essential role in the oxidative function of the citric acid cycle. This Kluyveromyces lactis (strain ATCC 8585 / CBS 2359 / DSM 70799 / NBRC 1267 / NRRL Y-1140 / WM37) (Yeast) protein is Isocitrate dehydrogenase [NAD] subunit 1, mitochondrial (IDH1).